The sequence spans 110 residues: Insulin (110 aa).

Positions 1 to 24 (MALWMRLLPLLAFLILWEPSPAHA) are cleaved as a signal peptide. 3 disulfide bridges follow: cysteine 31-cysteine 96, cysteine 43-cysteine 109, and cysteine 95-cysteine 100. Residues 57-87 (GVDDPQMPQLELGGSPGAGDLRALALEVARQ) constitute a propeptide, c peptide.

It belongs to the insulin family. As to quaternary structure, heterodimer of a B chain and an A chain linked by two disulfide bonds.

It localises to the secreted. Its function is as follows. Insulin decreases blood glucose concentration. It increases cell permeability to monosaccharides, amino acids and fatty acids. It accelerates glycolysis, the pentose phosphate cycle, and glycogen synthesis in liver. This is Insulin (INS) from Psammomys obesus (Fat sand rat).